Consider the following 103-residue polypeptide: Zinc-containing ferredoxin (103 aa).

Positions 1 to 36 (GIDPNYRTSKPVVGDHSGHKIYGPVESPKVLGVHGT) are N-terminal extension. H19 is a Zn(2+) binding site. An N6-methyllysine modification is found at K29. H34 contacts Zn(2+). 4Fe-4S ferredoxin-type domains follow at residues 35-65 (GTIV…WYET) and 74-103 (KADP…VKPP). Residues C45 and C51 each coordinate [3Fe-4S] cluster. C55 is a binding site for [4Fe-4S] cluster. D76 lines the Zn(2+) pocket. [4Fe-4S] cluster is bound by residues C83, C86, and C89. C93 contacts [3Fe-4S] cluster.

[3Fe-4S] cluster serves as cofactor. Requires [4Fe-4S] cluster as cofactor. The cofactor is Zn(2+).

In terms of biological role, ferredoxins are iron-sulfur proteins that transfer electrons in a wide variety of metabolic reactions. The sequence is that of Zinc-containing ferredoxin (zfx) from Sulfolobus acidocaldarius (strain ATCC 33909 / DSM 639 / JCM 8929 / NBRC 15157 / NCIMB 11770).